Reading from the N-terminus, the 429-residue chain is Glutamate-1-semialdehyde 2,1-aminomutase (429 aa).

At lysine 272 the chain carries N6-(pyridoxal phosphate)lysine.

The protein belongs to the class-III pyridoxal-phosphate-dependent aminotransferase family. HemL subfamily. It depends on pyridoxal 5'-phosphate as a cofactor.

The protein localises to the cytoplasm. The catalysed reaction is (S)-4-amino-5-oxopentanoate = 5-aminolevulinate. Its pathway is porphyrin-containing compound metabolism; protoporphyrin-IX biosynthesis; 5-aminolevulinate from L-glutamyl-tRNA(Glu): step 2/2. In Methanothrix thermoacetophila (strain DSM 6194 / JCM 14653 / NBRC 101360 / PT) (Methanosaeta thermophila), this protein is Glutamate-1-semialdehyde 2,1-aminomutase.